The sequence spans 340 residues: Integral membrane protein SED5 (340 aa).

The Cytoplasmic segment spans residues 1-319 (MNIKDRTSEF…KYFDRIKSNR (319 aa)). Residues 31–51 (RLQEKESENFANNTTGNGKSV) form a disordered region. Positions 39 to 51 (NFANNTTGNGKSV) are enriched in polar residues. A coiled-coil region spans residues 146 to 173 (LNTQMKNISGSFKDVLEERQRLEMANKD). The disordered stretch occupies residues 180–231 (TDTGHAPADDQTQSNHAADLTTYNNSNPFMTSLLDESSEKNNNSSNQGELSF). Over residues 189 to 209 (DQTQSNHAADLTTYNNSNPFM) the composition is skewed to polar residues. The region spanning 249-311 (NVYLQERNRA…SGAQRELLKY (63 aa)) is the t-SNARE coiled-coil homology domain. A helical; Anchor for type IV membrane protein membrane pass occupies residues 320-340 (WLAAKVFFIIFVFFVIWVLVN).

Belongs to the syntaxin family. In terms of assembly, interacts with SLY1, STF1, SFB3 and GOS1.

The protein localises to the membrane. The protein resides in the golgi apparatus membrane. Functionally, required for vesicular transport between the endoplasmic reticulum and the Golgi complex. Acts as a target organelle soluble NSF attachment protein receptor (t-SNARE). In Saccharomyces cerevisiae (strain ATCC 204508 / S288c) (Baker's yeast), this protein is Integral membrane protein SED5 (SED5).